Consider the following 335-residue polypeptide: Putative hydrogenase expression/formation protein MJ0676 (335 aa).

This sequence belongs to the HypE family.

This chain is Putative hydrogenase expression/formation protein MJ0676, found in Methanocaldococcus jannaschii (strain ATCC 43067 / DSM 2661 / JAL-1 / JCM 10045 / NBRC 100440) (Methanococcus jannaschii).